We begin with the raw amino-acid sequence, 419 residues long: Gamma-glutamyl phosphate reductase (419 aa).

The protein belongs to the gamma-glutamyl phosphate reductase family.

It localises to the cytoplasm. It carries out the reaction L-glutamate 5-semialdehyde + phosphate + NADP(+) = L-glutamyl 5-phosphate + NADPH + H(+). It participates in amino-acid biosynthesis; L-proline biosynthesis; L-glutamate 5-semialdehyde from L-glutamate: step 2/2. Its function is as follows. Catalyzes the NADPH-dependent reduction of L-glutamate 5-phosphate into L-glutamate 5-semialdehyde and phosphate. The product spontaneously undergoes cyclization to form 1-pyrroline-5-carboxylate. The protein is Gamma-glutamyl phosphate reductase of Marinomonas sp. (strain MWYL1).